The primary structure comprises 533 residues: Calcium-dependent protein kinase 8 (533 aa).

The interval 1–21 (MGNCCASPGSETGSKKGKPKI) is disordered. A lipid anchor (N-myristoyl glycine) is attached at glycine 2. The 259-residue stretch at 57 to 315 (YDLGREVGRG…AAQVLEHSWI (259 aa)) folds into the Protein kinase domain. Residues 63 to 71 (VGRGEFGIT) and lysine 86 each bind ATP. Catalysis depends on aspartate 181, which acts as the Proton acceptor. Serine 221 carries the phosphoserine modification. The tract at residues 321 to 351 (APNVSLGETVKARLKQFSVMNKLKKRALRVI) is autoinhibitory domain. 4 consecutive EF-hand domains span residues 358–394 (EEVA…GQQQ), 395–430 (IPDT…LKKM), 431–466 (ANDE…EVDT), and 467–502 (NSEE…GTDW). Ca(2+) is bound by residues aspartate 371, threonine 375, lysine 377, glutamate 382, aspartate 408, aspartate 410, aspartate 412, threonine 414, glutamate 419, aspartate 444, asparagine 446, serine 448, tyrosine 450, glutamate 455, aspartate 480, aspartate 482, aspartate 484, and arginine 486. Serine 488 bears the Phosphoserine mark. Position 491 (glutamate 491) interacts with Ca(2+). Serine 526 is modified (phosphoserine).

The protein belongs to the protein kinase superfamily. Ser/Thr protein kinase family. CDPK subfamily.

The protein localises to the cell membrane. The enzyme catalyses L-seryl-[protein] + ATP = O-phospho-L-seryl-[protein] + ADP + H(+). It catalyses the reaction L-threonyl-[protein] + ATP = O-phospho-L-threonyl-[protein] + ADP + H(+). Activated by calcium. Autophosphorylation may play an important role in the regulation of the kinase activity. Its function is as follows. May play a role in signal transduction pathways that involve calcium as a second messenger. This Arabidopsis thaliana (Mouse-ear cress) protein is Calcium-dependent protein kinase 8 (CPK8).